We begin with the raw amino-acid sequence, 118 residues long: Putative pterin-4-alpha-carbinolamine dehydratase (118 aa).

This sequence belongs to the pterin-4-alpha-carbinolamine dehydratase family.

It carries out the reaction (4aS,6R)-4a-hydroxy-L-erythro-5,6,7,8-tetrahydrobiopterin = (6R)-L-erythro-6,7-dihydrobiopterin + H2O. This chain is Putative pterin-4-alpha-carbinolamine dehydratase, found in Xanthomonas euvesicatoria pv. vesicatoria (strain 85-10) (Xanthomonas campestris pv. vesicatoria).